The chain runs to 310 residues: Collagen-like protein V6 (310 aa).

Residues 1 to 41 (MSLSTLFSPNTYNINSKSQTLNNLPSNPTSQTNTLWSNNAY) show a composition bias toward polar residues. The segment at 1–183 (MSLSTLFSPN…GDPGAKGDPG (183 aa)) is disordered. 2 Collagen-like domains span residues 61–119 (GQKG…KGQA) and 123–182 (GLKG…KGDP). The span at 92–101 (SGDKGDKGDS) shows a compositional bias: basic and acidic residues. N-linked (GlcNAc...) asparagine; by host glycosylation is found at Asn227 and Asn264.

It belongs to the sputnik virus V6 family.

This chain is Collagen-like protein V6, found in Sputnik virophage.